The primary structure comprises 262 residues: Protein Pcal_0062 (262 aa).

The protein belongs to the CinA family.

The protein is Protein Pcal_0062 of Pyrobaculum calidifontis (strain DSM 21063 / JCM 11548 / VA1).